Reading from the N-terminus, the 142-residue chain is HTH-type transcriptional regulator MntR (142 aa).

The region spanning 1 to 63 is the HTH dtxR-type domain; the sequence is MTTPSMEDYI…YEKYRGLVLT (63 aa). Cd(2+) is bound by residues aspartate 8, glutamate 11, histidine 77, glutamate 99, glutamate 102, and histidine 103. 6 residues coordinate Mn(2+): aspartate 8, glutamate 11, histidine 77, glutamate 99, glutamate 102, and histidine 103.

The protein belongs to the DtxR/MntR family. As to quaternary structure, homodimer.

Its subcellular location is the cytoplasm. Its activity is regulated as follows. DNA binding is strongly activated by Mn(2+) and Cd(2+), but it is poorly activated by non-cognate metal cations, including Co(2+), Fe(2+), Ni(2+), Ca(2+) and Zn(2+). In the strict absence of divalent transition metal ions, MntR has a low affinity for DNA. In terms of biological role, central regulator of manganese homeostasis that regulates the expression of both manganese uptake and efflux systems. In the presence of high levels of manganese, it mediates repression of the manganese uptake systems MntH and MntABCD and activation of the efflux systems MneP and MneS. Binds with high affinity to the regulatory regions of its target genes. The manganese concentration required for activation of efflux is higher than that for repression of uptake. The protein is HTH-type transcriptional regulator MntR of Bacillus subtilis (strain 168).